The following is a 173-amino-acid chain: MVDSTLIKDSTDTSVAEPVIKPHLILALDYGVKKMGMALGNSLTETARAFDILAMNNGQPDWDNLLGIIKVWGVAKVVVGLPLNMDGSSSMLSKRAHKFARRLAHRIMEQHLPVIVSLCDERLTSVAAREIAWENGWIKHERAPIDDISACILMSTYFADPHSSIAIDAIKAD.

It belongs to the YqgF nuclease family.

Its subcellular location is the cytoplasm. In terms of biological role, could be a nuclease involved in processing of the 5'-end of pre-16S rRNA. The polypeptide is Putative pre-16S rRNA nuclease (Psychrobacter cryohalolentis (strain ATCC BAA-1226 / DSM 17306 / VKM B-2378 / K5)).